The sequence spans 134 residues: ATP synthase epsilon chain (134 aa).

The tract at residues 100–134 is disordered; sequence NQKLQNENLSEEEKEHYEKQRSRSQALLNLASAKV. A compositionally biased stretch (basic and acidic residues) spans 110-120; the sequence is EEEKEHYEKQR.

Belongs to the ATPase epsilon chain family. F-type ATPases have 2 components, CF(1) - the catalytic core - and CF(0) - the membrane proton channel. CF(1) has five subunits: alpha(3), beta(3), gamma(1), delta(1), epsilon(1). CF(0) has three main subunits: a, b and c.

It localises to the cell inner membrane. Its function is as follows. Produces ATP from ADP in the presence of a proton gradient across the membrane. In Sulfurihydrogenibium sp. (strain YO3AOP1), this protein is ATP synthase epsilon chain.